A 337-amino-acid polypeptide reads, in one-letter code: ATP-dependent 6-phosphofructokinase (337 aa).

ATP is bound at residue Gly11. An ADP-binding site is contributed by 21 to 25 (RAVVR). Residues 72–73 (RY) and 102–105 (GDGS) each bind ATP. Asp103 is a Mg(2+) binding site. 125–127 (TID) serves as a coordination point for substrate. Asp127 functions as the Proton acceptor in the catalytic mechanism. Position 154 (Arg154) interacts with ADP. Substrate contacts are provided by residues Arg162 and 169 to 171 (MGR). ADP is bound by residues 185–187 (GAD), Lys212, and 214–216 (KNH). Substrate is bound by residues Glu223, Arg245, and 251-254 (HILR).

This sequence belongs to the phosphofructokinase type A (PFKA) family. ATP-dependent PFK group I subfamily. Prokaryotic clade 'B1' sub-subfamily. In terms of assembly, homotetramer. The cofactor is Mg(2+).

It is found in the cytoplasm. It carries out the reaction beta-D-fructose 6-phosphate + ATP = beta-D-fructose 1,6-bisphosphate + ADP + H(+). Its pathway is carbohydrate degradation; glycolysis; D-glyceraldehyde 3-phosphate and glycerone phosphate from D-glucose: step 3/4. Allosterically activated by ADP and other diphosphonucleosides, and allosterically inhibited by phosphoenolpyruvate. Functionally, catalyzes the phosphorylation of D-fructose 6-phosphate to fructose 1,6-bisphosphate by ATP, the first committing step of glycolysis. This is ATP-dependent 6-phosphofructokinase from Streptococcus pyogenes serotype M1.